The following is a 375-amino-acid chain: Queuine tRNA-ribosyltransferase (375 aa).

Catalysis depends on Asp89, which acts as the Proton acceptor. Residues 89–93 (DSGGF), Asp143, Gln187, and Gly214 each bind substrate. Residues 245 to 251 (GVGKPED) are RNA binding. The active-site Nucleophile is the Asp264. The interval 269-273 (TRNAR) is RNA binding; important for wobble base 34 recognition. Zn(2+) contacts are provided by Cys302, Cys304, Cys307, and His333.

This sequence belongs to the queuine tRNA-ribosyltransferase family. Homodimer. Within each dimer, one monomer is responsible for RNA recognition and catalysis, while the other monomer binds to the replacement base PreQ1. Requires Zn(2+) as cofactor.

It carries out the reaction 7-aminomethyl-7-carbaguanine + guanosine(34) in tRNA = 7-aminomethyl-7-carbaguanosine(34) in tRNA + guanine. Its pathway is tRNA modification; tRNA-queuosine biosynthesis. In terms of biological role, catalyzes the base-exchange of a guanine (G) residue with the queuine precursor 7-aminomethyl-7-deazaguanine (PreQ1) at position 34 (anticodon wobble position) in tRNAs with GU(N) anticodons (tRNA-Asp, -Asn, -His and -Tyr). Catalysis occurs through a double-displacement mechanism. The nucleophile active site attacks the C1' of nucleotide 34 to detach the guanine base from the RNA, forming a covalent enzyme-RNA intermediate. The proton acceptor active site deprotonates the incoming PreQ1, allowing a nucleophilic attack on the C1' of the ribose to form the product. After dissociation, two additional enzymatic reactions on the tRNA convert PreQ1 to queuine (Q), resulting in the hypermodified nucleoside queuosine (7-(((4,5-cis-dihydroxy-2-cyclopenten-1-yl)amino)methyl)-7-deazaguanosine). The chain is Queuine tRNA-ribosyltransferase from Salmonella typhi.